The sequence spans 126 residues: MFITLMKSKIHRATVTEANLDYVGSITIDEDLMEAADIMENEKVQVVDNNNGNRFETYVIKGERGSGMICLNGAAARLVHPGDLIIIISYGIFDREEAKTFNPKVVFVDEKNKIINIKSEEKHGEI.

The Schiff-base intermediate with substrate; via pyruvic acid role is filled by Ser-25. Pyruvic acid (Ser) is present on Ser-25. Position 57 (Thr-57) interacts with substrate. Tyr-58 serves as the catalytic Proton donor. 73-75 contacts substrate; the sequence is GAA.

The protein belongs to the PanD family. Heterooctamer of four alpha and four beta subunits. Pyruvate is required as a cofactor. Post-translationally, is synthesized initially as an inactive proenzyme, which is activated by self-cleavage at a specific serine bond to produce a beta-subunit with a hydroxyl group at its C-terminus and an alpha-subunit with a pyruvoyl group at its N-terminus.

It localises to the cytoplasm. It catalyses the reaction L-aspartate + H(+) = beta-alanine + CO2. It functions in the pathway cofactor biosynthesis; (R)-pantothenate biosynthesis; beta-alanine from L-aspartate: step 1/1. Its function is as follows. Catalyzes the pyruvoyl-dependent decarboxylation of aspartate to produce beta-alanine. This is Aspartate 1-decarboxylase from Acetivibrio thermocellus (strain ATCC 27405 / DSM 1237 / JCM 9322 / NBRC 103400 / NCIMB 10682 / NRRL B-4536 / VPI 7372) (Clostridium thermocellum).